The following is a 769-amino-acid chain: Phosphoribosylformylglycinamidine synthase subunit PurL (769 aa).

Polar residues predominate over residues 1–13 (MTGTPSAPTTSPD). The tract at residues 1–30 (MTGTPSAPTTSPDDQADGPGEGTVDRQPYR) is disordered. H65 is an active-site residue. The ATP site is built by Y68 and K109. E111 lines the Mg(2+) pocket. Substrate contacts are provided by residues 112–115 (SHNH) and R134. Residue H113 is the Proton acceptor of the active site. Mg(2+) is bound at residue D135. Q260 is a binding site for substrate. D288 lines the Mg(2+) pocket. 337-339 (ESQ) is a substrate binding site. Positions 524 and 561 each coordinate ATP. N562 provides a ligand contact to Mg(2+). S564 provides a ligand contact to substrate.

This sequence belongs to the FGAMS family. As to quaternary structure, monomer. Part of the FGAM synthase complex composed of 1 PurL, 1 PurQ and 2 PurS subunits.

It is found in the cytoplasm. It carries out the reaction N(2)-formyl-N(1)-(5-phospho-beta-D-ribosyl)glycinamide + L-glutamine + ATP + H2O = 2-formamido-N(1)-(5-O-phospho-beta-D-ribosyl)acetamidine + L-glutamate + ADP + phosphate + H(+). The protein operates within purine metabolism; IMP biosynthesis via de novo pathway; 5-amino-1-(5-phospho-D-ribosyl)imidazole from N(2)-formyl-N(1)-(5-phospho-D-ribosyl)glycinamide: step 1/2. Functionally, part of the phosphoribosylformylglycinamidine synthase complex involved in the purines biosynthetic pathway. Catalyzes the ATP-dependent conversion of formylglycinamide ribonucleotide (FGAR) and glutamine to yield formylglycinamidine ribonucleotide (FGAM) and glutamate. The FGAM synthase complex is composed of three subunits. PurQ produces an ammonia molecule by converting glutamine to glutamate. PurL transfers the ammonia molecule to FGAR to form FGAM in an ATP-dependent manner. PurS interacts with PurQ and PurL and is thought to assist in the transfer of the ammonia molecule from PurQ to PurL. In Parafrankia sp. (strain EAN1pec), this protein is Phosphoribosylformylglycinamidine synthase subunit PurL.